A 62-amino-acid polypeptide reads, in one-letter code: Photosystem II reaction center protein Z (62 aa).

A run of 2 helical transmembrane segments spans residues 8–28 (ALLALIFVSFALVVGVPVVFA) and 41–61 (FSGLSLWLLLVFVVGILNSFV).

Belongs to the PsbZ family. In terms of assembly, PSII is composed of 1 copy each of membrane proteins PsbA, PsbB, PsbC, PsbD, PsbE, PsbF, PsbH, PsbI, PsbJ, PsbK, PsbL, PsbM, PsbT, PsbY, PsbZ, Psb30/Ycf12, at least 3 peripheral proteins of the oxygen-evolving complex and a large number of cofactors. It forms dimeric complexes.

The protein localises to the plastid. It is found in the chloroplast thylakoid membrane. Functionally, controls the interaction of photosystem II (PSII) cores with the light-harvesting antenna, aiding in the dissipation of excitation energy within PSII. PSII is a light-driven water plastoquinone oxidoreductase, using light energy to abstract electrons from H(2)O, generating a proton gradient subsequently used for ATP formation. The chain is Photosystem II reaction center protein Z from Chlamydomonas reinhardtii (Chlamydomonas smithii).